The sequence spans 379 residues: Protein trichome birefringence-like 36 (379 aa).

Residues 8-24 (VLFLSLCLILGKVVLSQ) form a helical; Signal-anchor for type II membrane protein membrane-spanning segment. A GDS motif motif is present at residues 123 to 125 (GDS). The DCXHWCLPGXXDXWN motif motif lies at 353-367 (DCSHWCLPGVPDIWN).

This sequence belongs to the PC-esterase family. TBL subfamily.

The protein localises to the membrane. May act as a bridging protein that binds pectin and other cell wall polysaccharides. Probably involved in maintaining esterification of pectins. May be involved in the specific O-acetylation of cell wall polymers. The protein is Protein trichome birefringence-like 36 (TBL36) of Arabidopsis thaliana (Mouse-ear cress).